The sequence spans 114 residues: Large ribosomal subunit protein P2 (114 aa).

The interval 84 to 114 is disordered; that stretch reads TDALQAGSKKGETKEGPKEESDEDMGFGLFD. Basic and acidic residues predominate over residues 92-102; that stretch reads KKGETKEGPKE.

It belongs to the eukaryotic ribosomal protein P1/P2 family. In terms of assembly, P1 and P2 exist as dimers at the large ribosomal subunit. Phosphorylated.

Its function is as follows. Plays an important role in the elongation step of protein synthesis. This chain is Large ribosomal subunit protein P2 (rpp-2), found in Brugia malayi (Filarial nematode worm).